The following is a 208-amino-acid chain: Interleukin-6 (208 aa).

Residues 1–29 (MNSRFTSAFTPFAVSLGLLLVMTSAFPTP) form the signal peptide. N-linked (GlcNAc...) asparagine glycosylation occurs at Asn38. Residues Cys72 and Cys78 are joined by a disulfide bond. A Phosphoserine modification is found at Ser81. A disulfide bridge connects residues Cys101 and Cys111.

This sequence belongs to the IL-6 superfamily. Component of a hexamer of two molecules each of IL6, IL6R and IL6ST; first binds to IL6R to associate with the signaling subunit IL6ST. Interacts with IL6R (via the N-terminal ectodomain); this interaction may be affected by IL6R-binding with SORL1, hence decreasing IL6 cis signaling. Interacts with SORL1 (via the N-terminal ectodomain); this interaction leads to IL6 internalization and lysosomal degradation. May form a trimeric complex with the soluble SORL1 ectodomain and soluble IL6R receptor; this interaction might stabilize circulating IL6, hence promoting IL6 trans signaling.

It is found in the secreted. Cytokine with a wide variety of biological functions in immunity, tissue regeneration, and metabolism. Binds to IL6R, then the complex associates to the signaling subunit IL6ST/gp130 to trigger the intracellular IL6-signaling pathway. The interaction with the membrane-bound IL6R and IL6ST stimulates 'classic signaling', whereas the binding of IL6 and soluble IL6R to IL6ST stimulates 'trans-signaling'. Alternatively, 'cluster signaling' occurs when membrane-bound IL6:IL6R complexes on transmitter cells activate IL6ST receptors on neighboring receiver cells. Its function is as follows. IL6 is a potent inducer of the acute phase response. Rapid production of IL6 contributes to host defense during infection and tissue injury, but excessive IL6 synthesis is involved in disease pathology. In the innate immune response, is synthesized by myeloid cells, such as macrophages and dendritic cells, upon recognition of pathogens through toll-like receptors (TLRs) at the site of infection or tissue injury. In the adaptive immune response, is required for the differentiation of B cells into immunoglobulin-secreting cells. Plays a major role in the differentiation of CD4(+) T cell subsets. Essential factor for the development of T follicular helper (Tfh) cells that are required for the induction of germinal-center formation. Required to drive naive CD4(+) T cells to the Th17 lineage. Also required for proliferation of myeloma cells and the survival of plasmablast cells. Functionally, acts as an essential factor in bone homeostasis and on vessels directly or indirectly by induction of VEGF, resulting in increased angiogenesis activity and vascular permeability. Induces, through 'trans-signaling' and synergistically with IL1B and TNF, the production of VEGF. Involved in metabolic controls, is discharged into the bloodstream after muscle contraction increasing lipolysis and improving insulin resistance. 'Trans-signaling' in central nervous system also regulates energy and glucose homeostasis. Mediates, through GLP-1, crosstalk between insulin-sensitive tissues, intestinal L cells and pancreatic islets to adapt to changes in insulin demand. Also acts as a myokine. Plays a protective role during liver injury, being required for maintenance of tissue regeneration. Also has a pivotal role in iron metabolism by regulating HAMP/hepcidin expression upon inflammation or bacterial infection. Through activation of IL6ST-YAP-NOTCH pathway, induces inflammation-induced epithelial regeneration. In Bubalus bubalis (Domestic water buffalo), this protein is Interleukin-6 (IL6).